Reading from the N-terminus, the 181-residue chain is Inorganic pyrophosphatase 2 (181 aa).

The substrate site is built by Lys-30, Arg-44, and Tyr-56. Positions 66, 71, and 103 each coordinate Mg(2+). Substrate is bound at residue Tyr-142.

It belongs to the PPase family. As to quaternary structure, homohexamer. Mg(2+) is required as a cofactor.

Its subcellular location is the cytoplasm. The catalysed reaction is diphosphate + H2O = 2 phosphate + H(+). Functionally, catalyzes the hydrolysis of inorganic pyrophosphate (PPi) forming two phosphate ions. The polypeptide is Inorganic pyrophosphatase 2 (Pseudomonas syringae pv. tomato (strain ATCC BAA-871 / DC3000)).